The following is a 438-amino-acid chain: MDTDILQKQDSELFEAIAKETGRQTETLELIASENFTSRAVMQACGSVMTNKYAEGYPGKRYYGGCEFVDIAENLARDRAKKLFGCDYVNVQPHSGSSANMAVLFSVLKPGDRIMGLDLSHGGHLTHGSSVNFSGQMYEAHSYGVDRETGCIDMNKVEELALQVRPKLIICGASAYSQGFDVKAFRVIADKVGAFLMADIAHPAGLIAAGLLGNPLPHCHFVTTTTHKTLRGPRGGMIMMGSDFENPMGITIKTKTGSRLKMMSEVMDAEVMPGIQGGPLMHIIAGKAVAFGEALQPAFRDYAAQVIKNAAAMAEKFTELGYKIVSGGTKNHLMLLDLRSKNVTGKVAENLLHSAGITVNKNMVPFDDKSPFVTSGIRVGTPAMTTRGMNEADSVLIAELIDRVITSAEKPDVADLCRSVREEIKALCLRNPIDGYTV.

(6S)-5,6,7,8-tetrahydrofolate is bound by residues L119 and G123–L125. An N6-(pyridoxal phosphate)lysine modification is found at K228. S370–F372 is a binding site for (6S)-5,6,7,8-tetrahydrofolate.

It belongs to the SHMT family. As to quaternary structure, homodimer. Requires pyridoxal 5'-phosphate as cofactor.

The protein resides in the cytoplasm. The catalysed reaction is (6R)-5,10-methylene-5,6,7,8-tetrahydrofolate + glycine + H2O = (6S)-5,6,7,8-tetrahydrofolate + L-serine. Its pathway is one-carbon metabolism; tetrahydrofolate interconversion. The protein operates within amino-acid biosynthesis; glycine biosynthesis; glycine from L-serine: step 1/1. Its function is as follows. Catalyzes the reversible interconversion of serine and glycine with tetrahydrofolate (THF) serving as the one-carbon carrier. This reaction serves as the major source of one-carbon groups required for the biosynthesis of purines, thymidylate, methionine, and other important biomolecules. Also exhibits THF-independent aldolase activity toward beta-hydroxyamino acids, producing glycine and aldehydes, via a retro-aldol mechanism. This Pelodictyon phaeoclathratiforme (strain DSM 5477 / BU-1) protein is Serine hydroxymethyltransferase.